Here is a 354-residue protein sequence, read N- to C-terminus: Type II restriction enzyme BanI (354 aa).

Homodimer.

The enzyme catalyses Endonucleolytic cleavage of DNA to give specific double-stranded fragments with terminal 5'-phosphates.. In terms of biological role, a P subtype restriction enzyme that recognizes the double-stranded sequence 5'-GGYRCC-3' and cleaves after G-1. The protein is Type II restriction enzyme BanI (banIR) of Aneurinibacillus aneurinilyticus (Bacillus aneurinolyticus).